Consider the following 184-residue polypeptide: Photosystem I assembly protein Ycf4 (184 aa).

A run of 2 helical transmembrane segments spans residues 19–39 and 57–77; these read ISNLCWAFTLFLGSLGFVLVG and IIFFPQGIVMSFYGIAGLFIS.

This sequence belongs to the Ycf4 family.

The protein resides in the plastid thylakoid membrane. In terms of biological role, seems to be required for the assembly of the photosystem I complex. The protein is Photosystem I assembly protein Ycf4 of Cuscuta reflexa (Southern Asian dodder).